Here is a 104-residue protein sequence, read N- to C-terminus: UPF0213 protein PA3854 (104 aa).

The GIY-YIG domain maps to 13 to 88 (KCWSVYLVRA…KALSKRAKER (76 aa)).

Belongs to the UPF0213 family.

This is UPF0213 protein PA3854 from Pseudomonas aeruginosa (strain ATCC 15692 / DSM 22644 / CIP 104116 / JCM 14847 / LMG 12228 / 1C / PRS 101 / PAO1).